The chain runs to 298 residues: Tyrosine recombinase XerC (298 aa).

The region spanning 2–88 is the Core-binding (CB) domain; the sequence is TDLHTDVERY…ALRSFFDWLV (87 aa). The 180-residue stretch at 109-288 folds into the Tyr recombinase domain; it reads HLPKNIDVDD…DFQHLASVYD (180 aa). Catalysis depends on residues Arg148, Lys172, His240, Arg243, and His266. Tyr275 acts as the O-(3'-phospho-DNA)-tyrosine intermediate in catalysis.

It belongs to the 'phage' integrase family. XerC subfamily. As to quaternary structure, forms a cyclic heterotetrameric complex composed of two molecules of XerC and two molecules of XerD, in which XerC interacts with XerD via its C-terminal region, XerD interacts with XerC via its C-terminal region and so on.

The protein localises to the cytoplasm. FtsK may regulate the catalytic switch between XerC and XerD in the heterotetrameric complex during the two steps of the recombination process. Its function is as follows. Site-specific tyrosine recombinase, which acts by catalyzing the cutting and rejoining of the recombining DNA molecules. Binds cooperatively to specific DNA consensus sequences that are separated from XerD binding sites by a short central region, forming the heterotetrameric XerC-XerD complex that recombines DNA substrates. The complex is essential to convert dimers of the bacterial chromosome into monomers to permit their segregation at cell division. It also contributes to the segregational stability of plasmids. In the complex XerC specifically exchanges the top DNA strands. This Escherichia coli O45:K1 (strain S88 / ExPEC) protein is Tyrosine recombinase XerC.